The following is a 318-amino-acid chain: Formimidoylglutamase (318 aa).

Mn(2+) contacts are provided by His130, Asp155, His157, Asp159, Asp246, and Asp248.

Belongs to the arginase family. The cofactor is Mn(2+).

The catalysed reaction is N-formimidoyl-L-glutamate + H2O = formamide + L-glutamate. Its pathway is amino-acid degradation; L-histidine degradation into L-glutamate; L-glutamate from N-formimidoyl-L-glutamate (hydrolase route): step 1/1. Its function is as follows. Catalyzes the conversion of N-formimidoyl-L-glutamate to L-glutamate and formamide. This is Formimidoylglutamase from Klebsiella pneumoniae subsp. pneumoniae (strain ATCC 700721 / MGH 78578).